Consider the following 336-residue polypeptide: Biotin synthase (336 aa).

A Radical SAM core domain is found at 52 to 279 (KAIQLSTLMS…KSYVRLSAGR (228 aa)). 3 residues coordinate [4Fe-4S] cluster: Cys67, Cys71, and Cys74. [2Fe-2S] cluster-binding residues include Cys111, Cys142, Cys202, and Arg274.

It belongs to the radical SAM superfamily. Biotin synthase family. Homodimer. It depends on [4Fe-4S] cluster as a cofactor. The cofactor is [2Fe-2S] cluster.

The enzyme catalyses (4R,5S)-dethiobiotin + (sulfur carrier)-SH + 2 reduced [2Fe-2S]-[ferredoxin] + 2 S-adenosyl-L-methionine = (sulfur carrier)-H + biotin + 2 5'-deoxyadenosine + 2 L-methionine + 2 oxidized [2Fe-2S]-[ferredoxin]. It participates in cofactor biosynthesis; biotin biosynthesis; biotin from 7,8-diaminononanoate: step 2/2. Functionally, catalyzes the conversion of dethiobiotin (DTB) to biotin by the insertion of a sulfur atom into dethiobiotin via a radical-based mechanism. This Pasteurella multocida (strain Pm70) protein is Biotin synthase.